Consider the following 222-residue polypeptide: MAGKPILHYFNGRGRMECIRWLLAAAGVEFEEKFIKTPEDLDKLTNDGSLLFQQVPMVEIDGMKLVQTRAILNYIATKYNLYGKDAKERALIDMYTEGVADLGEMILLLPLCPPNEKDAKVASIKEKSTNRYLPAFEKVLKSHGQDYLVGNKLSRADIQLVELLYYVEELDPSLLANFPLLKALKTRVSNLPTVKKFLQPGSQRKPPMDAKKIRRSQEYFPD.

N-acetylmethionine is present on Met1. Position 2 is an N-acetylalanine; in Glutathione S-transferase alpha M14, N-terminally processed (Ala2). The 81-residue stretch at 3 to 83 (GKPILHYFNG…YIATKYNLYG (81 aa)) folds into the GST N-terminal domain. Residue Lys4 is modified to N6-succinyllysine. Glutathione is bound by residues Tyr9, 54 to 55 (QV), and 67 to 68 (QT). One can recognise a GST C-terminal domain in the interval 85–208 (DAKERALIDM…QPGSQRKPPM (124 aa)). The tract at residues 199–222 (QPGSQRKPPMDAKKIRRSQEYFPD) is disordered. Residues 206–222 (PPMDAKKIRRSQEYFPD) are compositionally biased toward basic and acidic residues.

It belongs to the GST superfamily. Alpha family. In terms of assembly, homodimer or heterodimer of GSTA1 and GSTA2.

The protein resides in the cytoplasm. The enzyme catalyses RX + glutathione = an S-substituted glutathione + a halide anion + H(+). It carries out the reaction prostaglandin A2 + glutathione = prostaglandin A2-S-(R)-glutathione. The catalysed reaction is prostaglandin J2 + glutathione = prostaglandin J2-S-(R)-glutathione. It catalyses the reaction (13S)-hydroperoxy-(9Z,11E)-octadecadienoate + 2 glutathione = (13S)-hydroxy-(9Z,11E)-octadecadienoate + glutathione disulfide + H2O. The enzyme catalyses androst-5-ene-3,17-dione = androst-4-ene-3,17-dione. Functionally, glutathione S-transferase that catalyzes the nucleophilic attack of the sulfur atom of glutathione on the electrophilic groups of a wide range of exogenous and endogenous compounds. Involved in the formation of glutathione conjugates of both prostaglandin A2 (PGA2) and prostaglandin J2 (PGJ2). It also catalyzes the isomerization of D5-androstene-3,17-dione (AD) into D4-androstene-3,17-dione and may therefore play an important role in hormone biosynthesis. Through its glutathione-dependent peroxidase activity toward the fatty acid hydroperoxide (13S)-hydroperoxy-(9Z,11E)-octadecadienoate/13-HPODE it is also involved in the metabolism of oxidized linoleic acid. The protein is Glutathione S-transferase alpha M14 of Sus scrofa (Pig).